Here is a 341-residue protein sequence, read N- to C-terminus: Geranylgeranyl pyrophosphate synthase penG (341 aa).

Positions 68, 71, and 100 each coordinate isopentenyl diphosphate. The Mg(2+) site is built by D107 and D111. Position 116 (R116) interacts with dimethylallyl diphosphate. Position 117 (R117) interacts with isopentenyl diphosphate. K194, T195, and Q228 together coordinate dimethylallyl diphosphate. D231 is a Mg(2+) binding site. Dimethylallyl diphosphate-binding residues include N235, K245, and K255.

This sequence belongs to the FPP/GGPP synthase family. It depends on Mg(2+) as a cofactor.

The enzyme catalyses isopentenyl diphosphate + dimethylallyl diphosphate = (2E)-geranyl diphosphate + diphosphate. It carries out the reaction isopentenyl diphosphate + (2E)-geranyl diphosphate = (2E,6E)-farnesyl diphosphate + diphosphate. It catalyses the reaction isopentenyl diphosphate + (2E,6E)-farnesyl diphosphate = (2E,6E,10E)-geranylgeranyl diphosphate + diphosphate. It participates in secondary metabolite biosynthesis. Geranylgeranyl pyrophosphate synthase; part of the gene cluster that mediates the biosynthesis of the indole diterpenes penitrems. The geranylgeranyl diphosphate (GGPP) synthase penG catalyzes the first step in penitrem biosynthesis via conversion of farnesyl pyrophosphate and isopentyl pyrophosphate into geranylgeranyl pyrophosphate (GGPP). Condensation of indole-3-glycerol phosphate with GGPP by the prenyl transferase penC then forms 3-geranylgeranylindole (3-GGI). Epoxidation by the FAD-dependent monooxygenase penM leads to a epoxidized-GGI that is substrate of the terpene cyclase penB for cyclization to yield paspaline. Paspaline is subsequently converted to 13-desoxypaxilline by the cytochrome P450 monooxygenase penP, the latter being then converted to paxilline by the cytochrome P450 monooxygenase penQ. Paxilline is converted to beta-paxitriol via C-10 ketoreduction by the short-chain dehydrogenase PC-15 which can be monoprenylated at the C-20 by the indole diterpene prenyltransferase penD. A two-step elimination (acetylation and elimination) process performed by the O-acetyltransferase PC-16 and the P.simplicissimum ptmI-ortholog not yet identified in P.crustosum, leads to the production of the prenylated form of penijanthine. The FAD-linked oxidoreductase ptmO then converts the prenylated form of penijanthine into PC-M5 which is in turn transformed into PC-M4 by the aromatic dimethylallyltransferase PC-22. A series of oxidation steps involving 4 cytochrome P450 monooxygenases (PC-21, PC-05, PC-23, PC-20) and a FAD-dependent monooxygenase (PC-14) are required for the transformation of PC-M4 to penitrems A and E. Synthesis of these final products is proposed to proceed via penitrems D and C (PC-21, PC-05, PC-14) and penitrems B and F (PC-21, PC-05, PC-14, PC-23). The chain is Geranylgeranyl pyrophosphate synthase penG from Penicillium crustosum (Blue mold fungus).